A 529-amino-acid polypeptide reads, in one-letter code: uncharacterized protein (529 aa).

It to M.jannaschii MJ1451.

This is an uncharacterized protein from Methanothermobacter thermautotrophicus (strain ATCC 29096 / DSM 1053 / JCM 10044 / NBRC 100330 / Delta H) (Methanobacterium thermoautotrophicum).